Here is a 165-residue protein sequence, read N- to C-terminus: Interferon gamma (165 aa).

The signal sequence occupies residues 1–23; it reads MKYTSYILAFQLCIVLGSLGCYC. At Gln-24 the chain carries Pyrrolidone carboxylic acid. N-linked (GlcNAc...) asparagine glycans are attached at residues Asn-48 and Asn-120.

It belongs to the type II (or gamma) interferon family. As to quaternary structure, homodimer. Interacts with IFNGR1 (via extracellular domain); this interaction promotes IFNGR1 dimerization. In terms of tissue distribution, released primarily from activated T lymphocytes.

The protein localises to the secreted. In terms of biological role, type II interferon produced by immune cells such as T-cells and NK cells that plays crucial roles in antimicrobial, antiviral, and antitumor responses by activating effector immune cells and enhancing antigen presentation. Primarily signals through the JAK-STAT pathway after interaction with its receptor IFNGR1 to affect gene regulation. Upon IFNG binding, IFNGR1 intracellular domain opens out to allow association of downstream signaling components JAK2, JAK1 and STAT1, leading to STAT1 activation, nuclear translocation and transcription of IFNG-regulated genes. Many of the induced genes are transcription factors such as IRF1 that are able to further drive regulation of a next wave of transcription. Plays a role in class I antigen presentation pathway by inducing a replacement of catalytic proteasome subunits with immunoproteasome subunits. In turn, increases the quantity, quality, and repertoire of peptides for class I MHC loading. Increases the efficiency of peptide generation also by inducing the expression of activator PA28 that associates with the proteasome and alters its proteolytic cleavage preference. Up-regulates as well MHC II complexes on the cell surface by promoting expression of several key molecules such as cathepsins B/CTSB, H/CTSH, and L/CTSL. Participates in the regulation of hematopoietic stem cells during development and under homeostatic conditions by affecting their development, quiescence, and differentiation. The chain is Interferon gamma (IFNG) from Macaca fascicularis (Crab-eating macaque).